The primary structure comprises 284 residues: L-ribulose-5-phosphate 3-epimerase UlaE (284 aa).

The protein belongs to the L-ribulose-5-phosphate 3-epimerase family.

It catalyses the reaction L-ribulose 5-phosphate = L-xylulose 5-phosphate. Its pathway is cofactor degradation; L-ascorbate degradation; D-xylulose 5-phosphate from L-ascorbate: step 3/4. Functionally, catalyzes the isomerization of L-xylulose-5-phosphate to L-ribulose-5-phosphate. Is involved in the anaerobic L-ascorbate utilization. This Escherichia coli O17:K52:H18 (strain UMN026 / ExPEC) protein is L-ribulose-5-phosphate 3-epimerase UlaE.